A 172-amino-acid polypeptide reads, in one-letter code: Bifunctional protein PyrR (172 aa).

The short motif at 93-105 is the PRPP-binding element; it reads VILIDDVLYTGRT.

Belongs to the purine/pyrimidine phosphoribosyltransferase family. PyrR subfamily. Homodimer and homohexamer; in equilibrium.

The catalysed reaction is UMP + diphosphate = 5-phospho-alpha-D-ribose 1-diphosphate + uracil. Its function is as follows. Regulates transcriptional attenuation of the pyrimidine nucleotide (pyr) operon by binding in a uridine-dependent manner to specific sites on pyr mRNA. This disrupts an antiterminator hairpin in the RNA and favors formation of a downstream transcription terminator, leading to a reduced expression of downstream genes. In terms of biological role, also displays a weak uracil phosphoribosyltransferase activity which is not physiologically significant. The sequence is that of Bifunctional protein PyrR from Streptococcus sanguinis (strain SK36).